The following is a 234-amino-acid chain: MAKLTKRMRVIREKVDATKQYDINEAIALLKELATAKFVESVDVAVNLGIDARKSDQNVRGATVLPHGTGRSVRVAVFTQGANAEAAKAAGAELVGMEDLADQIKKGEMNFDVVIASPDAMRVVGQLGQVLGPRGLMPNPKVGTVTPNVAEAVKNAKAGQVRYRNDKNGIIHTTIGKVDFDADKLKENLEALLVALKKAKPTQAKGVYIKKVSISTTMGAGVAVDQAGLSASVN.

The protein belongs to the universal ribosomal protein uL1 family. Part of the 50S ribosomal subunit.

Functionally, binds directly to 23S rRNA. The L1 stalk is quite mobile in the ribosome, and is involved in E site tRNA release. Its function is as follows. Protein L1 is also a translational repressor protein, it controls the translation of the L11 operon by binding to its mRNA. The chain is Large ribosomal subunit protein uL1 from Escherichia coli (strain 55989 / EAEC).